The chain runs to 54 residues: ATP synthase F(0) complex subunit 8 (54 aa).

A helical membrane pass occupies residues 8–24 (PWFSIMLLTWFTFSLLI).

It belongs to the ATPase protein 8 family. Component of the ATP synthase complex composed at least of ATP5F1A/subunit alpha, ATP5F1B/subunit beta, ATP5MC1/subunit c (homooctomer), MT-ATP6/subunit a, MT-ATP8/subunit 8, ATP5ME/subunit e, ATP5MF/subunit f, ATP5MG/subunit g, ATP5MK/subunit k, ATP5MJ/subunit j, ATP5F1C/subunit gamma, ATP5F1D/subunit delta, ATP5F1E/subunit epsilon, ATP5PF/subunit F6, ATP5PB/subunit b, ATP5PD/subunit d, ATP5PO/subunit OSCP. ATP synthase complex consists of a soluble F(1) head domain (subunits alpha(3) and beta(3)) - the catalytic core - and a membrane F(0) domain - the membrane proton channel (subunits c, a, 8, e, f, g, k and j). These two domains are linked by a central stalk (subunits gamma, delta, and epsilon) rotating inside the F1 region and a stationary peripheral stalk (subunits F6, b, d, and OSCP).

The protein resides in the mitochondrion membrane. In terms of biological role, subunit 8, of the mitochondrial membrane ATP synthase complex (F(1)F(0) ATP synthase or Complex V) that produces ATP from ADP in the presence of a proton gradient across the membrane which is generated by electron transport complexes of the respiratory chain. ATP synthase complex consist of a soluble F(1) head domain - the catalytic core - and a membrane F(1) domain - the membrane proton channel. These two domains are linked by a central stalk rotating inside the F(1) region and a stationary peripheral stalk. During catalysis, ATP synthesis in the catalytic domain of F(1) is coupled via a rotary mechanism of the central stalk subunits to proton translocation. In vivo, can only synthesize ATP although its ATP hydrolase activity can be activated artificially in vitro. Part of the complex F(0) domain. The chain is ATP synthase F(0) complex subunit 8 from Gallus gallus (Chicken).